The primary structure comprises 172 residues: Stellate protein CG33247 (172 aa).

Belongs to the casein kinase 2 subunit beta family. In terms of assembly, interacts in vitro with the casein kinase 2 alpha subunit (CkII-alpha). The relevance of such interaction is however unclear in vivo. As to expression, probably not expressed in wild-type flies. In males lacking the Y chromosome, it is testis-specific and constitutes the main component of star-shaped crystals.

Functionally, unknown. In males lacking the Y chromosome, its strong overexpression leads to the appearance of proteinaceous star-shaped crystals in the primary spermatocytes causing meiotic drive, possibly by interfering with normal casein kinase 2 activity. The polypeptide is Stellate protein CG33247 (Ste:CG33247) (Drosophila melanogaster (Fruit fly)).